The following is a 430-amino-acid chain: Aspartate aminotransferase, mitochondrial (430 aa).

Residues 1 to 29 (MALLHSSRILSGMAAAFHPGLAAAASARA) constitute a mitochondrion transit peptide. Thr48 carries the phosphothreonine modification. At Lys59 the chain carries N6-acetyllysine. Gly65 contributes to the substrate binding site. At Lys73 the chain carries N6-acetyllysine; alternate. Lys73 is modified (N6-succinyllysine; alternate). Lys82 carries the N6-acetyllysine modification. Lys90 is subject to N6-acetyllysine; alternate. Position 90 is an N6-succinyllysine; alternate (Lys90). Tyr96 carries the 3'-nitrotyrosine; alternate modification. Tyr96 is subject to Phosphotyrosine; alternate. Residues Lys107 and Lys122 each carry the N6-acetyllysine; alternate modification. An N6-succinyllysine; alternate mark is found at Lys107 and Lys122. Residue Ser143 is modified to Phosphoserine. Position 159 is an N6-acetyllysine; alternate (Lys159). The residue at position 159 (Lys159) is an N6-succinyllysine; alternate. Substrate is bound at residue Trp162. Position 185 is an N6-acetyllysine; alternate (Lys185). Lys185 is modified (N6-succinyllysine; alternate). Asn215 provides a ligand contact to substrate. Position 227 is an N6-succinyllysine (Lys227). Lys234 is modified (N6-acetyllysine). Lys279 and Lys296 each carry N6-acetyllysine; alternate. The residue at position 279 (Lys279) is an N6-(pyridoxal phosphate)lysine; alternate. At Lys296 the chain carries N6-succinyllysine; alternate. N6-acetyllysine is present on Lys302. Residue Lys309 is modified to N6-acetyllysine; alternate. Residue Lys309 is modified to N6-succinyllysine; alternate. Arg313 is modified (asymmetric dimethylarginine). Lys338 carries the N6-acetyllysine; alternate modification. The residue at position 338 (Lys338) is an N6-succinyllysine; alternate. Lys345 carries the N6-acetyllysine modification. Lys363 bears the N6-acetyllysine; alternate mark. Lys363 bears the N6-succinyllysine; alternate mark. N6-acetyllysine occurs at positions 364 and 387. N6-acetyllysine; alternate occurs at positions 396 and 404. N6-succinyllysine; alternate occurs at positions 396 and 404. Arg407 is a substrate binding site.

It belongs to the class-I pyridoxal-phosphate-dependent aminotransferase family. In terms of assembly, homodimer. Pyridoxal 5'-phosphate is required as a cofactor. Acetylation of Lys-296, Lys-345 and Lys-363 is observed in liver mitochondria from fasted mice but not from fed mice. As to expression, detected in brain (at protein level).

It is found in the mitochondrion matrix. Its subcellular location is the cell membrane. It carries out the reaction L-aspartate + 2-oxoglutarate = oxaloacetate + L-glutamate. It catalyses the reaction L-kynurenine + 2-oxoglutarate = kynurenate + L-glutamate + H2O. In terms of biological role, catalyzes the irreversible transamination of the L-tryptophan metabolite L-kynurenine to form kynurenic acid (KA). As a member of the malate-aspartate shuttle, it has a key role in the intracellular NAD(H) redox balance. Is important for metabolite exchange between mitochondria and cytosol, and for amino acid metabolism. Facilitates cellular uptake of long-chain free fatty acids. This is Aspartate aminotransferase, mitochondrial (Got2) from Mus musculus (Mouse).